The sequence spans 123 residues: Large ribosomal subunit protein bL19 (123 aa).

Belongs to the bacterial ribosomal protein bL19 family.

Its function is as follows. This protein is located at the 30S-50S ribosomal subunit interface and may play a role in the structure and function of the aminoacyl-tRNA binding site. The polypeptide is Large ribosomal subunit protein bL19 (Laribacter hongkongensis (strain HLHK9)).